Reading from the N-terminus, the 208-residue chain is Large ribosomal subunit protein uL3 (208 aa).

At Q149 the chain carries N5-methylglutamine.

This sequence belongs to the universal ribosomal protein uL3 family. In terms of assembly, part of the 50S ribosomal subunit. Forms a cluster with proteins L14 and L19. In terms of processing, methylated by PrmB.

One of the primary rRNA binding proteins, it binds directly near the 3'-end of the 23S rRNA, where it nucleates assembly of the 50S subunit. The sequence is that of Large ribosomal subunit protein uL3 from Actinobacillus pleuropneumoniae serotype 5b (strain L20).